The following is a 468-amino-acid chain: Cysteine--tRNA ligase (468 aa).

A Zn(2+)-binding site is contributed by cysteine 29. The short motif at 31–41 (PTVYNYIHIGN) is the 'HIGH' region element. 3 residues coordinate Zn(2+): cysteine 209, histidine 234, and glutamate 238. The short motif at 266-270 (KMSKS) is the 'KMSKS' region element. Residue lysine 269 coordinates ATP. Phosphoserine is present on serine 270.

The protein belongs to the class-I aminoacyl-tRNA synthetase family. As to quaternary structure, monomer. It depends on Zn(2+) as a cofactor.

It localises to the cytoplasm. It catalyses the reaction tRNA(Cys) + L-cysteine + ATP = L-cysteinyl-tRNA(Cys) + AMP + diphosphate. This chain is Cysteine--tRNA ligase, found in Oceanobacillus iheyensis (strain DSM 14371 / CIP 107618 / JCM 11309 / KCTC 3954 / HTE831).